The chain runs to 856 residues: DNA mismatch repair protein MutS (856 aa).

617 to 624 (GPNMGGKS) is a binding site for ATP.

It belongs to the DNA mismatch repair MutS family.

In terms of biological role, this protein is involved in the repair of mismatches in DNA. It is possible that it carries out the mismatch recognition step. This protein has a weak ATPase activity. This chain is DNA mismatch repair protein MutS, found in Psychromonas ingrahamii (strain DSM 17664 / CCUG 51855 / 37).